The primary structure comprises 63 residues: Large ribosomal subunit protein uL29 (63 aa).

Belongs to the universal ribosomal protein uL29 family.

The chain is Large ribosomal subunit protein uL29 from Serratia proteamaculans (strain 568).